Here is a 249-residue protein sequence, read N- to C-terminus: GTP cyclohydrolase 1 type 2 homolog (249 aa).

A divalent metal cation-binding residues include His64, His65, Asp102, His217, and Glu221.

Belongs to the GTP cyclohydrolase I type 2/NIF3 family. Homohexamer.

In Neisseria meningitidis serogroup A / serotype 4A (strain DSM 15465 / Z2491), this protein is GTP cyclohydrolase 1 type 2 homolog.